A 334-amino-acid chain; its full sequence is Gap junction alpha-2 protein (334 aa).

Over 1–12 (MAGWELLKLLLD) the chain is Cytoplasmic. Residues 13–35 (DVQEHSTLIGKVWLTVLFIFRIF) traverse the membrane as a helical segment. The Extracellular segment spans residues 36 to 75 (ILSVAGESVWTDEQSDFICNTQQPGCTNVCYDQAFPISHV). A helical membrane pass occupies residues 76-98 (RYWVLQFLFVSTPTLIYLGHMVY). Residues 99 to 153 (LSKKEEKERQKENESRILVANEAQTEVHSSATKKIRIQGPLMCTYTTSVVFKSIF) lie on the Cytoplasmic side of the membrane. Residues 154-176 (EAGFLLGQWYIYGFVMSPIFVCE) traverse the membrane as a helical segment. Residues 177–207 (RIPCKHKVECFVSRPMEKTIFIIFMLVVSLI) are Extracellular-facing. The helical transmembrane segment at 208 to 230 (SLLLNLMELIHLSFKCFQHGIKE) threads the bilayer. The Cytoplasmic portion of the chain corresponds to 231–334 (GATCSPTGIP…HQTSSKQQYV (104 aa)).

Belongs to the connexin family. Alpha-type (group II) subfamily. As to quaternary structure, a connexon is composed of a hexamer of connexins. Resides primarily in the ovary, oocytes and early embryos.

The protein resides in the cell membrane. The protein localises to the cell junction. It localises to the gap junction. Its function is as follows. One gap junction consists of a cluster of closely packed pairs of transmembrane channels, the connexons, through which materials of low MW diffuse from one cell to a neighboring cell. The chain is Gap junction alpha-2 protein (gja2) from Xenopus laevis (African clawed frog).